The primary structure comprises 274 residues: Diaminopimelate epimerase (274 aa).

Residues N13, Q45, and N63 each coordinate substrate. C72 serves as the catalytic Proton donor. Substrate-binding positions include 73-74 (GN), N158, N191, and 209-210 (ER). Residue C218 is the Proton acceptor of the active site. 219-220 (GT) is a binding site for substrate.

The protein belongs to the diaminopimelate epimerase family. In terms of assembly, homodimer.

It is found in the cytoplasm. The enzyme catalyses (2S,6S)-2,6-diaminopimelate = meso-2,6-diaminopimelate. It functions in the pathway amino-acid biosynthesis; L-lysine biosynthesis via DAP pathway; DL-2,6-diaminopimelate from LL-2,6-diaminopimelate: step 1/1. Catalyzes the stereoinversion of LL-2,6-diaminopimelate (L,L-DAP) to meso-diaminopimelate (meso-DAP), a precursor of L-lysine and an essential component of the bacterial peptidoglycan. The sequence is that of Diaminopimelate epimerase from Pelagibacter ubique (strain HTCC1062).